Reading from the N-terminus, the 350-residue chain is MHQDGISSMNQLGGLFVNGRPLPLDTRQQIVRLAVSGMRPCDISRILKVSNGCVSKILGRYYRTGVLEPKGIGGSKPRLATPPVVARIAQLKGECPALFAWEIQRQLCAEGLCTQDKTPSVSSINRVLRALQEDQGLPCTRLRSPAVLAPAVLTPHSGSETPRGTHPGTGHRNRTIFSPSQAEALEKEFQRGQYPDSVARGKLATATSLPEDTVRVWFSNRRAKWRRQEKLKWEMQLPGASQGLTVPRVAPGIISAQQSPGSVPTAALPALEPLGPSCYQLCWATAPERCLSDTPPKACLKPCWDCGSFLLPVIAPSCVDVAWPCLDASLAHHLIGGAGKATPTHFSHWP.

The paired DNA-binding region spans 5–131 (GISSMNQLGG…SSINRVLRAL (127 aa)). Residues 8–64 (SMNQLGGLFVNGRPLPLDTRQQIVRLAVSGMRPCDISRILKVSNGCVSKILGRYYRT) are PAI subdomain. Positions 83-131 (PVVARIAQLKGECPALFAWEIQRQLCAEGLCTQDKTPSVSSINRVLRAL) are RED subdomain. Residues 153–172 (LTPHSGSETPRGTHPGTGHR) form a disordered region. A DNA-binding region (homeobox) is located at residues 170-229 (GHRNRTIFSPSQAEALEKEFQRGQYPDSVARGKLATATSLPEDTVRVWFSNRRAKWRRQE). Positions 278-350 (CYQLCWATAP…ATPTHFSHWP (73 aa)) are transcription repression.

This sequence belongs to the paired homeobox family.

It localises to the nucleus. In terms of biological role, plays an important role in the differentiation and development of pancreatic islet beta cells. Transcriptional repressor that binds to a common element in the glucagon, insulin and somatostatin promoters. Competes with PAX6 for this same promoter binding site. Isoform 2 appears to be a dominant negative form antagonizing PAX4 transcriptional activity. The polypeptide is Paired box protein Pax-4 (PAX4) (Homo sapiens (Human)).